Here is a 539-residue protein sequence, read N- to C-terminus: Chaperonin GroEL (539 aa).

ATP-binding positions include 29-32, 86-90, glycine 413, 476-478, and aspartate 492; these read TLGP, DGTTT, and NAA.

It belongs to the chaperonin (HSP60) family. In terms of assembly, forms a cylinder of 14 subunits composed of two heptameric rings stacked back-to-back. Interacts with the co-chaperonin GroES.

It localises to the cytoplasm. It carries out the reaction ATP + H2O + a folded polypeptide = ADP + phosphate + an unfolded polypeptide.. Together with its co-chaperonin GroES, plays an essential role in assisting protein folding. The GroEL-GroES system forms a nano-cage that allows encapsulation of the non-native substrate proteins and provides a physical environment optimized to promote and accelerate protein folding. This Streptococcus thermophilus (strain CNRZ 1066) protein is Chaperonin GroEL.